The primary structure comprises 461 residues: Photosystem II CP43 reaction center protein (461 aa).

Residues 1–2 constitute a propeptide that is removed on maturation; it reads ME. N-acetylthreonine is present on Thr3. Thr3 is subject to Phosphothreonine. A run of 5 helical transmembrane segments spans residues 57–81, 122–143, 166–188, 243–263, and 279–300; these read LFEV…PHLA, LLGP…KDRN, KALY…RKIT, KPFA…LSYS, and WFNN…ASQA. Glu355 serves as a coordination point for [CaMn4O5] cluster. Residues 435–459 form a helical membrane-spanning segment; it reads RARAAAAGFEKGIDRDLEPVLFMTP.

This sequence belongs to the PsbB/PsbC family. PsbC subfamily. As to quaternary structure, PSII is composed of 1 copy each of membrane proteins PsbA, PsbB, PsbC, PsbD, PsbE, PsbF, PsbH, PsbI, PsbJ, PsbK, PsbL, PsbM, PsbT, PsbX, PsbY, PsbZ, Psb30/Ycf12, at least 3 peripheral proteins of the oxygen-evolving complex and a large number of cofactors. It forms dimeric complexes. Binds multiple chlorophylls and provides some of the ligands for the Ca-4Mn-5O cluster of the oxygen-evolving complex. It may also provide a ligand for a Cl- that is required for oxygen evolution. PSII binds additional chlorophylls, carotenoids and specific lipids. serves as cofactor.

It is found in the plastid. The protein localises to the chloroplast thylakoid membrane. Its function is as follows. One of the components of the core complex of photosystem II (PSII). It binds chlorophyll and helps catalyze the primary light-induced photochemical processes of PSII. PSII is a light-driven water:plastoquinone oxidoreductase, using light energy to abstract electrons from H(2)O, generating O(2) and a proton gradient subsequently used for ATP formation. This chain is Photosystem II CP43 reaction center protein, found in Nandina domestica (Heavenly bamboo).